The sequence spans 480 residues: Serralysin (480 aa).

Residue His181 participates in Zn(2+) binding. The active site involves Glu182. The Zn(2+) site is built by His185 and His191. Ca(2+) contacts are provided by Arg260, Asp263, Asp292, Gly294, Gly295, Asp297, Thr334, and Glu336. Hemolysin-type calcium-binding repeat units lie at residues 339 to 356 (IGGS…ANTL) and 357 to 374 (KGGA…ADNL).

It belongs to the peptidase M10B family. Zn(2+) is required as a cofactor. Requires Ca(2+) as cofactor.

The protein resides in the secreted. The catalysed reaction is Preferential cleavage of bonds with hydrophobic residues in P1'.. The polypeptide is Serralysin (prtA) (Photorhabdus laumondii subsp. laumondii (strain DSM 15139 / CIP 105565 / TT01) (Photorhabdus luminescens subsp. laumondii)).